Consider the following 840-residue polypeptide: Lethal(3)malignant brain tumor-like protein 1 (840 aa).

At S117 the chain carries Phosphoserine. A disordered region spans residues E127–E269. Acidic residues predominate over residues P156 to S165. Positions V200–S210 are enriched in polar residues. A compositionally biased stretch (basic and acidic residues) spans A236–E247. The span at P250–A266 shows a compositional bias: polar residues. MBT repeat units lie at residues W274 to P374, F382 to P481, and F490 to P585. An interaction with monomethylated and dimethylated peptides region spans residues F447–Y454. The tract at residues H580–R605 is disordered. Residues S613 to L656 form a CCHHC-type zinc finger. Zn(2+)-binding residues include C622, C627, H640, and C646. The tract at residues K657–P697 is disordered. Basic residues predominate over residues P677 to K695.

In terms of assembly, homodimer. Interacts with RB1/RB (when monomethylated at 'Lys-860'). Interacts with p53/TP53 (when monomethylated at 'Lys-382'). Interacts with CBX3, ETV6, KMT5A and VCP/p97. Ubiquitinated in a VCP/p97-dependent way following DNA damage, leading to its removal from DNA damage sites, promoting accessibility of H4K20me2 mark for DNA repair protein TP53BP1, which is then recruited to DNA damage sites. Widely expressed. Expression is reduced in colorectal cancer cell line SW480 and promyelocytic leukemia cell line HL-60.

It is found in the nucleus. In terms of biological role, polycomb group (PcG) protein that specifically recognizes and binds mono- and dimethyllysine residues on target proteins, thereby acting as a 'reader' of a network of post-translational modifications. PcG proteins maintain the transcriptionally repressive state of genes: acts as a chromatin compaction factor by recognizing and binding mono- and dimethylated histone H1b/H1-4 at 'Lys-26' (H1bK26me1 and H1bK26me2) and histone H4 at 'Lys-20' (H4K20me1 and H4K20me2), leading to condense chromatin and repress transcription. Recognizes and binds p53/TP53 monomethylated at 'Lys-382', leading to repress p53/TP53-target genes. Also recognizes and binds RB1/RB monomethylated at 'Lys-860'. Participates in the ETV6-mediated repression. Probably plays a role in cell proliferation. Overexpression induces multinucleated cells, suggesting that it is required to accomplish normal mitosis. The sequence is that of Lethal(3)malignant brain tumor-like protein 1 (L3MBTL1) from Homo sapiens (Human).